Reading from the N-terminus, the 179-residue chain is Peptide deformylase (179 aa).

Cys102 and His144 together coordinate Fe cation. Residue Glu145 is part of the active site. His148 serves as a coordination point for Fe cation.

This sequence belongs to the polypeptide deformylase family. Fe(2+) serves as cofactor.

It carries out the reaction N-terminal N-formyl-L-methionyl-[peptide] + H2O = N-terminal L-methionyl-[peptide] + formate. Its function is as follows. Removes the formyl group from the N-terminal Met of newly synthesized proteins. Requires at least a dipeptide for an efficient rate of reaction. N-terminal L-methionine is a prerequisite for activity but the enzyme has broad specificity at other positions. The chain is Peptide deformylase from Wolbachia sp. subsp. Brugia malayi (strain TRS).